A 403-amino-acid chain; its full sequence is 4-hydroxyphenylpyruvate dioxygenase (403 aa).

VOC domains follow at residues 25–169 (GYDH…LVER) and 201–359 (RIDH…LFTK). Residues His204, His287, and Glu370 each contribute to the Fe cation site.

This sequence belongs to the 4HPPD family. Homodimer. It depends on Fe cation as a cofactor.

It catalyses the reaction 3-(4-hydroxyphenyl)pyruvate + O2 = homogentisate + CO2. The protein operates within amino-acid degradation; L-phenylalanine degradation; acetoacetate and fumarate from L-phenylalanine: step 3/6. In terms of biological role, 4-hydroxyphenylpyruvate dioxygenase; part of the L-tyrosine degradation gene cluster that mediates the biosynthesis of the brownish pigment pyomelanin as an alternative melanin. The 4-hydroxyphenylpyruvate dioxygenase hppD catalyzes the conversion of 4-hydroxyphenylpyruvate to homogentisic acid (HGA). The protein hmgX is crucial for this conversion and thus, probably functions as an accessory factor to mediate specific activity of hppD. The homogentisate 1,2-dioxygenase hmgA is then involved in the cleavage of the aromatic ring of HGA and its conversion to 4-maleylacetoacetate. When hmgA activity is lowered by the cell wall integrity (CWI) signaling pathway, HGA accumulates and leads to the production of pyomelanin through benzoquinone acetic acid after oxidation and polymerization. On the opposite, in non-stress conditions, both hppD and hmgA activities are balanced and HGA is degraded into 4-maleylacetoacetate. 4-maleylacetoacetate is further converted to 4-fumarylacetoacetate by the maleylacetoacetate isomerase maiA, which is degraded into fumarate and acetoacetate by the fumarylacetoacetase fahA. The polypeptide is 4-hydroxyphenylpyruvate dioxygenase (Aspergillus fumigatus (strain ATCC MYA-4609 / CBS 101355 / FGSC A1100 / Af293) (Neosartorya fumigata)).